The primary structure comprises 122 residues: Large ribosomal subunit protein uL14 (122 aa).

This sequence belongs to the universal ribosomal protein uL14 family. As to quaternary structure, part of the 50S ribosomal subunit. Forms a cluster with proteins L3 and L19. In the 70S ribosome, L14 and L19 interact and together make contacts with the 16S rRNA in bridges B5 and B8.

Binds to 23S rRNA. Forms part of two intersubunit bridges in the 70S ribosome. This chain is Large ribosomal subunit protein uL14, found in Dehalococcoides mccartyi (strain ATCC BAA-2100 / JCM 16839 / KCTC 5957 / BAV1).